Reading from the N-terminus, the 158-residue chain is UPF0225 protein PSEEN1229 (158 aa).

It belongs to the UPF0225 family.

In Pseudomonas entomophila (strain L48), this protein is UPF0225 protein PSEEN1229.